The primary structure comprises 204 residues: ADP-ribosylation factor-like protein 15 (204 aa).

GTP-binding positions include 39–46 (GLTGSGKT), 82–86 (ELGGA), and 142–145 (NHQD).

It belongs to the small GTPase superfamily. Arf family.

The chain is ADP-ribosylation factor-like protein 15 (ARL15) from Homo sapiens (Human).